We begin with the raw amino-acid sequence, 364 residues long: MEKQILLLPGDGIGPEIIAETKRVLEEIARLYHHTFQFVEGRIGGDAIDATGSPLPEETLDLAKGSDAILLGAVGGPKWDGNAPEKRPEKGLLQIRKALGLYANLRPVRVLKPLMGASTLKEEVLADVDLLIVRELTGGLYFGEPRERRQINGEDGAVDTLLYTRGEIERIVHQAFQFARTRKKRVVSVDKANVLESSRLWREIADEVAREYPDVTLSHMLVDNAAMQLIRDPRQFDVIVTENLFGDILSDEASMITGSLGLLPSASMNTSKVGLFEPVHGSAPDIAGTGAANPLATILSAAMMLQYSFGLADEAKAIEVAVDRVLAQGVRTKDIAKASENAVSTTAITNAVMEALALKSASSR.

76 to 89 (GPKWDGNAPEKRPE) provides a ligand contact to NAD(+). 4 residues coordinate substrate: Arg96, Arg106, Arg134, and Asp223. Positions 223, 247, and 251 each coordinate Mg(2+). 281 to 293 (GSAPDIAGTGAAN) is a binding site for NAD(+).

It belongs to the isocitrate and isopropylmalate dehydrogenases family. LeuB type 1 subfamily. As to quaternary structure, homodimer. Mg(2+) serves as cofactor. Mn(2+) is required as a cofactor.

It is found in the cytoplasm. The enzyme catalyses (2R,3S)-3-isopropylmalate + NAD(+) = 4-methyl-2-oxopentanoate + CO2 + NADH. It participates in amino-acid biosynthesis; L-leucine biosynthesis; L-leucine from 3-methyl-2-oxobutanoate: step 3/4. In terms of biological role, catalyzes the oxidation of 3-carboxy-2-hydroxy-4-methylpentanoate (3-isopropylmalate) to 3-carboxy-4-methyl-2-oxopentanoate. The product decarboxylates to 4-methyl-2 oxopentanoate. The protein is 3-isopropylmalate dehydrogenase of Shouchella clausii (strain KSM-K16) (Alkalihalobacillus clausii).